The primary structure comprises 1424 residues: MRDIQDFDSLMIRLASPDTIRAWSYGEVKKPETINYRTLRPERDGLFCERIFGTTKEWECFCGKFKSIRYKGVICDRCGVEVTHFKVRRERMGHIELAAPVSHIWYYRSVPSRMGLLLNLQVAALRSVLYYEKYIVIDANDTDLEPMQLLTEDEYRDAHERYGAAFTAGMGAGAIKTLLQNINLDELAAQLRAKMIEKGAKSDQRLLRRIEIVENFRASGNKPEWMILDVIPVIPPDLRPMVQLDGGRFATSDLNDLYRRVIHRNSRLSKLMELKAPDIIIRNEKRMLQEAVDALFDNSKRKKAIKGASNRPLKSISDLLKGKQGRFRQNLLGKRVDYSGRSVIVVGPELKLWQCGLPTKMALELFKPFIMKKLVQKEVVSNIKKAKLLVEQEAAEVFAVLDEVVSEHPVLLNRAPTLHRLGIQAFEPVLVEGKAIRLHPLVCKAFNADFDGDQMAIHVPLTQAAQMECWTLMLSARNLLDPANGKTIVFPTQDMVLGLYYLTKERALPEGKKERLYSSVPEVLMAAECHAVGWQEPVLIDYETEPGKIETVRTTPGRILFNEEMPEGVPFTNYALNDKKIRKLIENVFKDKGPWLAVQLLDKLKAVGYKYATYFGATLSMEDMIIPPEKAGMLEKANKEVLEIYNQYKGGHITQEERYNRVVDVWQKTNSNLKEILMKRLQEDKGGFNTIHMMETSGARGSKDQINQLAGMRGLMSKPTGDIIELPIRSNFKEGLNVMEFFISTNGARKGLTDTALKTSDAGYLTRRLVDIAQNVVVNEEDCGTINGIEYAAIKRGDEIRESLSERIAGKYTLERVIHPITGELLIDVNEYITDETAKKIEEAGVETVKLRTVLTCESKHGVCVKCYGRDLARNRIVRIGEAVGIIAAQSIGQPGTQLTMRTFHEGGTASKNVEENRIVFNDYSIIVRGIKGSYVTLKNGHFLFTRKGEFTFSRVLNEYALKKGETALVSTGTRVVKGNPLYTLKNGKEVLSENIAIAEVRDNIIYLTGQEQTIEIRNGSEVVVKENDVIKAGETVGTFDPFADPILAEYDGFVRFEDILPGTTLKEEADEETGVVEKRISDAHFDKMQPRIFISDESGNTVGEDSYFLPGGAQLLVEEGQEIKAGAILAKIAKESVKTKDITGGLPRVSELLEARRPKSPAVLAAIAGVVTIKKGLLKGKRTIMVRDEYGHDVKHLVPIGKRMLVRDGDTVKAGEPLCDGSFDPHDILNILGENALQNYLMKEIKEVYDAQGVTINDKHVGIIVRQMLRKVKIVSVGDTKFIFDQQIDKYRFHEENKRVKEEGGQPAVARPMFQGITKAALNIDSFISAASFQETTKVLTNAAIAGSSDELRGLKENVIIGHLIPAGTGMKQYRDIKLFDKNKSDLDIQMNEILERRRLEAEAAQALEEKELIEEENFLDDL.

Residues Cys60, Cys62, Cys75, and Cys78 each coordinate Zn(2+). Residues Asp449, Asp451, and Asp453 each contribute to the Mg(2+) site. Zn(2+) contacts are provided by Cys783, Cys857, Cys864, and Cys867.

Belongs to the RNA polymerase beta' chain family. The RNAP catalytic core consists of 2 alpha, 1 beta, 1 beta' and 1 omega subunit. When a sigma factor is associated with the core the holoenzyme is formed, which can initiate transcription. Requires Mg(2+) as cofactor. Zn(2+) is required as a cofactor.

The catalysed reaction is RNA(n) + a ribonucleoside 5'-triphosphate = RNA(n+1) + diphosphate. Its function is as follows. DNA-dependent RNA polymerase catalyzes the transcription of DNA into RNA using the four ribonucleoside triphosphates as substrates. The sequence is that of DNA-directed RNA polymerase subunit beta' from Treponema denticola (strain ATCC 35405 / DSM 14222 / CIP 103919 / JCM 8153 / KCTC 15104).